A 756-amino-acid polypeptide reads, in one-letter code: Cholesterol uptake protein 1 (756 aa).

A signal peptide spans M1–N18. Over Q19–D268 the chain is Extracellular. N-linked (GlcNAc...) asparagine glycosylation is found at N39 and N63. Residues V124 to R129 carry the Cholesterol-binding sequence motif motif. N-linked (GlcNAc...) asparagine glycans are attached at residues N140, N174, and N257. The helical transmembrane segment at Y269 to V289 threads the bilayer. Residues Y290–V373 lie on the Cytoplasmic side of the membrane. The chain crosses the membrane as a helical span at residues Y374–I394. Topologically, residues S395–Y421 are extracellular. Residues F422–I442 form a helical membrane-spanning segment. Residues V443–G473 lie on the Cytoplasmic side of the membrane. A helical membrane pass occupies residues L474–V494. The Extracellular segment spans residues C495–N498. The helical transmembrane segment at I499–L517 threads the bilayer. The Cytoplasmic portion of the chain corresponds to K518 to S530. The chain crosses the membrane as a helical span at residues A531–V551. Topologically, residues H552–M554 are extracellular. A helical transmembrane segment spans residues I555–F575. The short motif at L570–K578 is the Cholesterol-binding sequence motif element. Topologically, residues Y576 to R612 are cytoplasmic. Residues F613 to A633 form a helical membrane-spanning segment. Residues H634–D637 lie on the Extracellular side of the membrane. Residues F638–I658 form a helical membrane-spanning segment. Residues L659–R671 are Cytoplasmic-facing. A helical membrane pass occupies residues A672–Q692. Over R693–A728 the chain is Extracellular. Residues F729 to M749 traverse the membrane as a helical segment. Topologically, residues R750 to F756 are cytoplasmic.

Belongs to the SID1 family. As to expression, highly expressed along the intestine with expression also detected in the pharynx, especially at the terminal bulb, and in the excretory gland cells.

It is found in the cell membrane. It carries out the reaction cholesterol(in) = cholesterol(out). Functionally, cholesterol-binding protein which is involved in dietary cholesterol uptake from the environment. Does not play a role in double-stranded RNA transport in contrast to other SID1 family members. This Caenorhabditis elegans protein is Cholesterol uptake protein 1.